Reading from the N-terminus, the 612-residue chain is UvrABC system protein C (612 aa).

One can recognise a GIY-YIG domain in the interval 20-98 (THSGVYRMLD…IKQHRPKYNI (79 aa)). In terms of domain architecture, UVR spans 208 to 243 (SSVLEEISAKMYQASEDMEYEKAQVYRDQLVVLRKL).

It belongs to the UvrC family. In terms of assembly, interacts with UvrB in an incision complex.

It localises to the cytoplasm. In terms of biological role, the UvrABC repair system catalyzes the recognition and processing of DNA lesions. UvrC both incises the 5' and 3' sides of the lesion. The N-terminal half is responsible for the 3' incision and the C-terminal half is responsible for the 5' incision. The protein is UvrABC system protein C of Francisella tularensis subsp. tularensis (strain FSC 198).